A 578-amino-acid chain; its full sequence is DNA primase (578 aa).

A CHC2-type zinc finger spans residues 40-64; that stretch reads CPFHQEKTPSFTVNFEKQFYFCFGC. A Toprim domain is found at 257 to 339; sequence KQILIVEGYV…GKNVKFIFLP (83 aa). Residues Glu-263, Asp-307, and Asp-309 each coordinate Mg(2+).

Belongs to the DnaG primase family. Monomer. Interacts with DnaB. Zn(2+) is required as a cofactor. Requires Mg(2+) as cofactor.

It carries out the reaction ssDNA + n NTP = ssDNA/pppN(pN)n-1 hybrid + (n-1) diphosphate.. Its function is as follows. RNA polymerase that catalyzes the synthesis of short RNA molecules used as primers for DNA polymerase during DNA replication. This is DNA primase from Buchnera aphidicola subsp. Baizongia pistaciae (strain Bp).